Reading from the N-terminus, the 296-residue chain is MASFLRFRLSASLKPYITFGRMLYTRIDKDGLTMLAGHLAYVSLLSLVPLVTVIFALFAAFPMFADISIKLKAFIFTNFMPATGDIIQNYLEQFVANSNRMTVVGTCGLIVTALLLIYSVDSVLNIIWRSKVHRSLVFSFAVYWMVLTLGPILVGASMVISSYLLSLQWLANARVDSMIDETLRLFPLLISWVSFWLLYSVVPTVRVPAQDALIGALVAALFFELGKKGFTMYITLFPSYQLIYGVLAVIPILFLWVYWSWCIVLLGAEITVTLGEYRAQRHQAITEKSPSQSQEI.

7 helical membrane passes run 44 to 64 (LLSL…FPMF), 67 to 87 (ISIK…GDII), 108 to 128 (GLIV…NIIW), 136 to 156 (LVFS…LVGA), 185 to 205 (LFPL…VPTV), 212 to 232 (ALIG…GFTM), and 246 to 266 (VLAV…IVLL).

Belongs to the UPF0761 family.

The protein resides in the cell inner membrane. This chain is UPF0761 membrane protein YE0031, found in Yersinia enterocolitica serotype O:8 / biotype 1B (strain NCTC 13174 / 8081).